A 179-amino-acid polypeptide reads, in one-letter code: Endoribonuclease YbeY (179 aa).

Zn(2+)-binding residues include His148, His152, and His158.

The protein belongs to the endoribonuclease YbeY family. Zn(2+) is required as a cofactor.

It is found in the cytoplasm. In terms of biological role, single strand-specific metallo-endoribonuclease involved in late-stage 70S ribosome quality control and in maturation of the 3' terminus of the 16S rRNA. The protein is Endoribonuclease YbeY of Prochlorococcus marinus (strain MIT 9312).